A 299-amino-acid chain; its full sequence is Recombination-associated protein RdgC (299 aa).

It belongs to the RdgC family.

The protein resides in the cytoplasm. The protein localises to the nucleoid. In terms of biological role, may be involved in recombination. The protein is Recombination-associated protein RdgC of Bordetella bronchiseptica (strain ATCC BAA-588 / NCTC 13252 / RB50) (Alcaligenes bronchisepticus).